A 226-amino-acid chain; its full sequence is Low-molecular weight cobalt-containing nitrile hydratase subunit beta (226 aa).

The interval 1–22 (MDGIHDLGGRAGLGPIKPESDE) is disordered.

It belongs to the nitrile hydratase subunit beta family. In terms of assembly, heterodimer of an alpha and a beta chain.

The enzyme catalyses an aliphatic primary amide = an aliphatic nitrile + H2O. In terms of biological role, NHase catalyzes the hydration of various nitrile compounds to the corresponding amides. The chain is Low-molecular weight cobalt-containing nitrile hydratase subunit beta from Rhodococcus rhodochrous.